A 664-amino-acid chain; its full sequence is tRNA uridine 5-carboxymethylaminomethyl modification enzyme MnmG (664 aa).

Residues 14–19 (GGGHSG), Val126, and Ser183 contribute to the FAD site. 277–291 (GPRYCPSIEDKIDRF) provides a ligand contact to NAD(+). Gln374 is a binding site for FAD.

This sequence belongs to the MnmG family. In terms of assembly, homodimer. Heterotetramer of two MnmE and two MnmG subunits. It depends on FAD as a cofactor.

The protein localises to the cytoplasm. Functionally, NAD-binding protein involved in the addition of a carboxymethylaminomethyl (cmnm) group at the wobble position (U34) of certain tRNAs, forming tRNA-cmnm(5)s(2)U34. The sequence is that of tRNA uridine 5-carboxymethylaminomethyl modification enzyme MnmG from Salinibacter ruber (strain DSM 13855 / M31).